A 463-amino-acid chain; its full sequence is Glutamate--tRNA ligase 1 (463 aa).

Positions 11–21 (PSPTGYLHIGG) match the 'HIGH' region motif. The 'KMSKS' region signature appears at 240-244 (KLSKR). Lys-243 contacts ATP.

The protein belongs to the class-I aminoacyl-tRNA synthetase family. Glutamate--tRNA ligase type 1 subfamily. As to quaternary structure, monomer.

The protein resides in the cytoplasm. The enzyme catalyses tRNA(Glu) + L-glutamate + ATP = L-glutamyl-tRNA(Glu) + AMP + diphosphate. Catalyzes the attachment of glutamate to tRNA(Glu) in a two-step reaction: glutamate is first activated by ATP to form Glu-AMP and then transferred to the acceptor end of tRNA(Glu). In Campylobacter jejuni subsp. doylei (strain ATCC BAA-1458 / RM4099 / 269.97), this protein is Glutamate--tRNA ligase 1.